The following is a 324-amino-acid chain: tRNA N6-adenosine threonylcarbamoyltransferase (324 aa).

Residues H107, H111, and Y127 each contribute to the Fe cation site. Substrate contacts are provided by residues 127–131 (YVSGG), D159, G172, E176, and N257. Residue D285 coordinates Fe cation.

It belongs to the KAE1 / TsaD family. As to quaternary structure, monomer. Component of the KEOPS complex that consists of Kae1, Bud32, Cgi121 and Pcc1; the whole complex dimerizes. Fe(2+) is required as a cofactor.

It is found in the cytoplasm. The enzyme catalyses L-threonylcarbamoyladenylate + adenosine(37) in tRNA = N(6)-L-threonylcarbamoyladenosine(37) in tRNA + AMP + H(+). Required for the formation of a threonylcarbamoyl group on adenosine at position 37 (t(6)A37) in tRNAs that read codons beginning with adenine. Is a component of the KEOPS complex that is probably involved in the transfer of the threonylcarbamoyl moiety of threonylcarbamoyl-AMP (TC-AMP) to the N6 group of A37. Kae1 likely plays a direct catalytic role in this reaction, but requires other protein(s) of the complex to fulfill this activity. The sequence is that of tRNA N6-adenosine threonylcarbamoyltransferase from Pyrococcus furiosus (strain ATCC 43587 / DSM 3638 / JCM 8422 / Vc1).